The following is a 454-amino-acid chain: Ribosomal protein uS12 methylthiotransferase RimO (454 aa).

The 112-residue stretch at 14–125 (SKVAFSHVGC…IAKVLDRVEK (112 aa)) folds into the MTTase N-terminal domain. [4Fe-4S] cluster contacts are provided by Cys23, Cys59, Cys88, Cys163, Cys167, and Cys170. One can recognise a Radical SAM core domain in the interval 149 to 378 (DKNKFVAYLR…ISVQQNISKD (230 aa)). Residues 381–452 (QSYVGSKMKI…EYDLYGETLK (72 aa)) enclose the TRAM domain.

Belongs to the methylthiotransferase family. RimO subfamily. [4Fe-4S] cluster is required as a cofactor.

It is found in the cytoplasm. The enzyme catalyses L-aspartate(89)-[ribosomal protein uS12]-hydrogen + (sulfur carrier)-SH + AH2 + 2 S-adenosyl-L-methionine = 3-methylsulfanyl-L-aspartate(89)-[ribosomal protein uS12]-hydrogen + (sulfur carrier)-H + 5'-deoxyadenosine + L-methionine + A + S-adenosyl-L-homocysteine + 2 H(+). Functionally, catalyzes the methylthiolation of an aspartic acid residue of ribosomal protein uS12. This is Ribosomal protein uS12 methylthiotransferase RimO from Prochlorococcus marinus (strain MIT 9215).